The following is a 296-amino-acid chain: Polyadenylate-binding protein 2 (296 aa).

Residues 1-102 form a disordered region; the sequence is MAAVSSAASL…EEEPGELTGD (102 aa). Composition is skewed to gly residues over residues 19 to 31 and 71 to 82; these read LRGG…GGQD and GRGGSGGGGAGG. A compositionally biased stretch (acidic residues) spans 84-97; the sequence is EELEDEELEEEEPG. Residues 107–141 are a coiled coil; that stretch reads DPELEAIKARVREMEEEAEKLKELQNEVEKQMNMS. The interval 146-296 is necessary for homooligomerization; sequence NAGPVIMSIE…ARVTSWYTPY (151 aa). The region spanning 163–240 is the RRM domain; it reads RSIYVGNVDY…RQIKVVPKRT (78 aa).

In terms of assembly, monomer and homooligomer. Binds RNA as a monomer and oligomerizes when bound to poly(A).

Its subcellular location is the nucleus. The protein localises to the cytoplasm. Functionally, involved in the 3'-end formation of mRNA precursors (pre-mRNA) by the addition of a poly(A) tail of 200-250 nt to the upstream cleavage product. Stimulates poly(A) polymerase (PAPOLA) conferring processivity on the poly(A) tail elongation reaction and also controls the poly(A) tail length. Increases the affinity of poly(A) polymerase for RNA. Binds to poly(A) and to poly(G) with high affinity. May protect the poly(A) tail from degradation. This Xenopus tropicalis (Western clawed frog) protein is Polyadenylate-binding protein 2.